The sequence spans 450 residues: MFAARLFKAMPARASAFPSVNASIQSRFMATVRNGRVAHERATFTIRDGPIFHGKSFGARSNISGEAVFTTSLVGYPESLTDPSYRGQILVFTQPLIGNYGVPSAEKDQHGLLKYFESPHLQAAGVVVADVAEQYSHWTAVQSLGEWCAREGVPAISGVDTRAIVTYLREQGSSLARITVGEEYDADQDEAFVDPEQIHLVRQVSTKAPFHVSAADPQCHVAVIDCGVKENILRSLVSRGASITVFPYDYPIHKVAHHFDGVFISNGPGDPTHCQETAYHLRRLMETSQVPIFGICLGHQLLALAIGARTIKLKYGNRAHNIPALDMSTGRCHITSQNHGYAVDASTLPSDWKPYFVNLNDSSNEGMIHKTRPIFSTQFHPEAKGGPLDSSYLFDIYLDSVRKYKASQSAFHPTRDSLPSPLLVDLLAKERVGVQPTIGMQNVAAAAAAA.

Residues 1 to 29 (MFAARLFKAMPARASAFPSVNASIQSRFM) constitute a mitochondrion transit peptide. The Glutamine amidotransferase type-1 domain maps to 220 to 407 (HVAVIDCGVK…LDSVRKYKAS (188 aa)). The Nucleophile role is filled by Cys-296. Residues His-380 and Glu-382 contribute to the active site.

It belongs to the CarA family. As to quaternary structure, heterodimer composed of 2 chains; the small (or glutamine) chain promotes the hydrolysis of glutamine to ammonia, which is used by the large (or ammonia) chain to synthesize carbamoyl phosphate.

It is found in the mitochondrion matrix. The enzyme catalyses hydrogencarbonate + L-glutamine + 2 ATP + H2O = carbamoyl phosphate + L-glutamate + 2 ADP + phosphate + 2 H(+). It catalyses the reaction L-glutamine + H2O = L-glutamate + NH4(+). The protein operates within amino-acid biosynthesis; L-arginine biosynthesis; carbamoyl phosphate from bicarbonate: step 1/1. Small subunit of the arginine-specific carbamoyl phosphate synthase (CPSase). CPSase catalyzes the formation of carbamoyl phosphate from the ammonia moiety of glutamine, carbonate, and phosphate donated by ATP, the first step of the arginine biosynthetic pathway. The small subunit (glutamine amidotransferase) binds and cleaves glutamine to supply the large subunit with the substrate ammonia. The sequence is that of Carbamoyl phosphate synthase arginine-specific small chain (cpa1) from Aspergillus oryzae (strain ATCC 42149 / RIB 40) (Yellow koji mold).